The primary structure comprises 83 residues: Cytochrome b559 subunit alpha (83 aa).

The chain crosses the membrane as a helical span at residues 21–35 (VIHSITIPSLFIAGW). His-23 serves as a coordination point for heme.

The protein belongs to the PsbE/PsbF family. Heterodimer of an alpha subunit and a beta subunit. PSII is composed of 1 copy each of membrane proteins PsbA, PsbB, PsbC, PsbD, PsbE, PsbF, PsbH, PsbI, PsbJ, PsbK, PsbL, PsbM, PsbT, PsbX, PsbY, PsbZ, Psb30/Ycf12, at least 3 peripheral proteins of the oxygen-evolving complex and a large number of cofactors. It forms dimeric complexes. The cofactor is heme b.

It localises to the plastid. The protein localises to the chloroplast thylakoid membrane. In terms of biological role, this b-type cytochrome is tightly associated with the reaction center of photosystem II (PSII). PSII is a light-driven water:plastoquinone oxidoreductase that uses light energy to abstract electrons from H(2)O, generating O(2) and a proton gradient subsequently used for ATP formation. It consists of a core antenna complex that captures photons, and an electron transfer chain that converts photonic excitation into a charge separation. This chain is Cytochrome b559 subunit alpha, found in Agrostis stolonifera (Creeping bentgrass).